The sequence spans 394 residues: 2-aminobenzenesulfonate 2,3-dioxygenase subunit alpha (394 aa).

The Rieske domain maps to 43–154 (WKFVCHVSEI…TETYLGLVFV (112 aa)). Residues cysteine 85, histidine 87, cysteine 105, and histidine 108 each coordinate [2Fe-2S] cluster. Fe cation-binding residues include histidine 209 and histidine 213.

It belongs to the bacterial ring-hydroxylating dioxygenase alpha subunit family. In terms of assembly, heterotetramer with a alpha2beta2 structure. Requires [2Fe-2S] cluster as cofactor. The cofactor is Fe cation.

It carries out the reaction 2-aminobenzenesulfonate + NADH + O2 + 2 H(+) = 2,3-dihydroxybenzenesulfonate + NH4(+) + NAD(+). With respect to regulation, inhibited by o-phenanthroline. Its function is as follows. Alpha subunit of the oxygenase component of the 2-aminobenzenesulfonate 2,3-dioxygenase system (deaminating) (ABSDOS). Can use 2-aminobenzenesulfonate (ABS), benzenesulfonate (BS), 4-toluenesulfonate (TS), 2-nitrobenzenesulfonate, 3- and 4-aminobenzenesulfonates, 4-chloro- and 4-hydroxybenzenesulfonates and pyridine-3-sulfonate as substrates. No desulfonation of ABS to aminocatechol or aminophenol detected. The sequence is that of 2-aminobenzenesulfonate 2,3-dioxygenase subunit alpha from Alcaligenes sp.